The primary structure comprises 237 residues: Urease accessory protein UreF (237 aa).

This sequence belongs to the UreF family. UreD, UreF and UreG form a complex that acts as a GTP-hydrolysis-dependent molecular chaperone, activating the urease apoprotein by helping to assemble the nickel containing metallocenter of UreC. The UreE protein probably delivers the nickel.

It localises to the cytoplasm. In terms of biological role, required for maturation of urease via the functional incorporation of the urease nickel metallocenter. This Rhodopseudomonas palustris (strain HaA2) protein is Urease accessory protein UreF.